The sequence spans 1426 residues: Phospholipid-transporting ATPase VD (1426 aa).

Residues 1–97 are Cytoplasmic-facing; the sequence is MTEALQWARY…PRNLFEQFHR (97 aa). The helical transmembrane segment at 98-118 threads the bilayer; the sequence is AANLYFLFLVVLNWVPLVEAF. Residues 119–121 are Exoplasmic loop-facing; that stretch reads QKE. A helical membrane pass occupies residues 122–142; sequence ITMLPLVVVLTIIAIKDGLED. At 143–321 the chain is on the cytoplasmic side; it reads YRKYKIDKQI…SKLERRANTD (179 aa). The helical transmembrane segment at 322 to 342 threads the bilayer; sequence VLWCVMLLVIMCLTGAVGHGI. At 343–365 the chain is on the exoplasmic loop side; sequence WLSRYEKMHFFNVPEPDGHIISP. A helical membrane pass occupies residues 366 to 386; sequence LLAGFYMFWTMIILLQVLIPI. The Cytoplasmic portion of the chain corresponds to 387–1113; sequence SLYVSIEIVK…HWCYTRLSNM (727 aa). D438 acts as the 4-aspartylphosphate intermediate in catalysis. The ATP site is built by D438, K439, and T440. Residue D438 coordinates Mg(2+). T440 contributes to the Mg(2+) binding site. A disordered region spans residues 506-531; sequence NGPLGNKPSNHLAGSSFTLGSGEGAS. Positions 512–524 are enriched in polar residues; the sequence is KPSNHLAGSSFTL. ATP-binding positions include E730, F772, K796, R840, T920, G921, D922, 996-1003, R1030, and K1036; that span reads GLIITGKT. Residue D1056 participates in Mg(2+) binding. N1059 and D1060 together coordinate ATP. D1060 provides a ligand contact to Mg(2+). The chain crosses the membrane as a helical span at residues 1114–1134; the sequence is ILYFFYKNVAYVNLLFWYQFF. The Exoplasmic loop segment spans residues 1135–1145; that stretch reads CGFSGTSMTDY. A helical membrane pass occupies residues 1146–1166; it reads WVLIFFNLLFTSAPPVIYGVL. Over 1167–1195 the chain is Cytoplasmic; it reads EKDVSAETLMQLPELYRSGQKSEAYLPHT. Residues 1196–1216 traverse the membrane as a helical segment; that stretch reads FWITLLDAFYQSLVCFFVPYF. The Exoplasmic loop segment spans residues 1217–1224; sequence TYQGSDTD. The helical transmembrane segment at 1225–1245 threads the bilayer; the sequence is IFAFGNPLNTAALFIVLLHLV. Topologically, residues 1246–1252 are cytoplasmic; the sequence is IESKSLT. The helical transmembrane segment at 1253 to 1273 threads the bilayer; sequence WIHLLVIIGSILSYFLFAIVF. Residues 1274-1292 are Exoplasmic loop-facing; sequence GAMCVTCNPPSNPYWIMQE. The chain crosses the membrane as a helical span at residues 1293-1313; sequence HMLDPVFYLVCILTTSIALLP. Over 1314–1426 the chain is Cytoplasmic; that stretch reads RFVYRVLQGS…MAGPSKGKES (113 aa). Position 1364–1371 (1364–1371) interacts with ATP; sequence ANQSAGKS.

It belongs to the cation transport ATPase (P-type) (TC 3.A.3) family. Type IV subfamily. Component of a P4-ATPase flippase complex which consists of a catalytic alpha subunit ATP10A and an accessory beta subunit TMEM30A. It depends on Mg(2+) as a cofactor. In terms of processing, autophosphorylated at the conserved aspartate of the P-type ATPase signature sequence. In terms of tissue distribution, expressed in placenta and, to a lesser extent, in kidney.

The protein resides in the cell membrane. It is found in the endoplasmic reticulum membrane. It catalyses the reaction ATP + H2O + phospholipidSide 1 = ADP + phosphate + phospholipidSide 2.. It carries out the reaction a beta-D-glucosyl-(1&lt;-&gt;1')-N-acylsphing-4-enine(out) + ATP + H2O = a beta-D-glucosyl-(1&lt;-&gt;1')-N-acylsphing-4-enine(in) + ADP + phosphate + H(+). Its function is as follows. Catalytic component of a P4-ATPase flippase complex, which catalyzes the hydrolysis of ATP coupled to the transport of glucosylceramide (GlcCer) from the outer to the inner leaflet of the plasma membrane. This chain is Phospholipid-transporting ATPase VD, found in Homo sapiens (Human).